Consider the following 431-residue polypeptide: Putative F-box/FBD/LRR-repeat protein At3g56780 (431 aa).

The F-box domain occupies 6–62; the sequence is CSCINELPDDLILKILSFVSTKHVVVTSLLSKKWKSLWTRVPILKYDVRDHTRFERF. LRR repeat units follow at residues 56–82, 88–113, 135–161, 162–187, 209–236, 237–262, 264–285, and 357–382; these read HTRFERFLDKSLFSHQSHVLESLHVEL, NKDIGPWIRTALHHHHCHLRELEIDA, LKGIVIDVEAPLTTVSLPSLKTLHIDH, SSLFDFGSLQMLLSNCNFITDLMVIR, LEGLKDVISISSSSAVCLPLLKTLHVAR, MEDFNNDSFCRLLSNCPVLSDLTLEE, TSDVLLNLDIDMPYLQRLSIIT, and CSERSVEMLVDLLLCFTKLVVLKLEH. The region spanning 391-423 is the FBD domain; it reads RWEPPSLVPECLLSSLEALEWKGYTGRYGDKDL.

This Arabidopsis thaliana (Mouse-ear cress) protein is Putative F-box/FBD/LRR-repeat protein At3g56780.